A 491-amino-acid polypeptide reads, in one-letter code: Nuatigenin 3-beta-glucosyltransferase (491 aa).

The active-site Proton acceptor is His20. His20 serves as a coordination point for an anthocyanidin. Asp125 functions as the Charge relay in the catalytic mechanism. Residues Ala352, Gln354, His369, Trp372, Asn373, Ser374, and Glu377 each contribute to the UDP-alpha-D-glucose site. Ala392 is a binding site for an anthocyanidin. UDP-alpha-D-glucose contacts are provided by Glu393 and Gln394.

It belongs to the UDP-glycosyltransferase family. As to expression, expressed in roots, stems and leaves.

It carries out the reaction nuatigenin + UDP-alpha-D-glucose = nuatigenin 3-beta-D-glucopyranoside + UDP + H(+). The catalysed reaction is diosgenin + UDP-alpha-D-glucose = diosgenin 3-O-beta-D-glucoside + UDP + H(+). It catalyses the reaction tigogenin + UDP-alpha-D-glucose = tigogenin 3-O-beta-D-glucopyranoside + UDP + H(+). The enzyme catalyses solasodine + UDP-alpha-D-glucose = solasodine 3-beta-D-glucoside + UDP + H(+). It carries out the reaction solanidine + UDP-alpha-D-glucose = solanidine 3-O-beta-D-glucopyranoside + UDP + H(+). The catalysed reaction is tomatidine + UDP-alpha-D-glucose = tomatidine 3-O-beta-D-glucopyranoside + UDP + H(+). In terms of biological role, glucosyltransferase involved in steroid saponin biosynthesis. Catalyzes the 3-O-glucosylation of steroidal sapogenins, such as diosgenin, nuatigenin and tigogenin. Can glucosylate steroidal alkaloids, such as solanidine, solasodine and tomatidine. In Solanum aculeatissimum (Dutch eggplant), this protein is Nuatigenin 3-beta-glucosyltransferase.